The primary structure comprises 189 residues: Elongation factor P (189 aa).

Belongs to the elongation factor P family.

It is found in the cytoplasm. It participates in protein biosynthesis; polypeptide chain elongation. In terms of biological role, involved in peptide bond synthesis. Stimulates efficient translation and peptide-bond synthesis on native or reconstituted 70S ribosomes in vitro. Probably functions indirectly by altering the affinity of the ribosome for aminoacyl-tRNA, thus increasing their reactivity as acceptors for peptidyl transferase. The chain is Elongation factor P from Rhizobium rhizogenes (strain K84 / ATCC BAA-868) (Agrobacterium radiobacter).